The sequence spans 360 residues: Phospho-N-acetylmuramoyl-pentapeptide-transferase (360 aa).

Transmembrane regions (helical) follow at residues 25–45 (RGILGVLTALVLSLWMGPWLI), 74–94 (MGGALILSAIGISTLLWADLA), 97–117 (YVWVVLAVTLLFGAIGWVDDY), 132–152 (WKYFWQSVFGLGAAIFLYMTA), 168–188 (IEIPLGIGFVILTYFVIVGSS), 199–219 (GLAIMPTVMVGGGLGIFCYLS), 236–256 (SGELIVFCGALIGAGLGFLWF), 263–283 (VFMGDVGALALGAALGTIAVI), 288–308 (VVLFIMGGVFVMETLSVMIQV), and 338–358 (VIVRFWIITVILVLVGLATLK).

This sequence belongs to the glycosyltransferase 4 family. MraY subfamily. It depends on Mg(2+) as a cofactor.

It is found in the cell inner membrane. It catalyses the reaction UDP-N-acetyl-alpha-D-muramoyl-L-alanyl-gamma-D-glutamyl-meso-2,6-diaminopimeloyl-D-alanyl-D-alanine + di-trans,octa-cis-undecaprenyl phosphate = di-trans,octa-cis-undecaprenyl diphospho-N-acetyl-alpha-D-muramoyl-L-alanyl-D-glutamyl-meso-2,6-diaminopimeloyl-D-alanyl-D-alanine + UMP. The protein operates within cell wall biogenesis; peptidoglycan biosynthesis. Catalyzes the initial step of the lipid cycle reactions in the biosynthesis of the cell wall peptidoglycan: transfers peptidoglycan precursor phospho-MurNAc-pentapeptide from UDP-MurNAc-pentapeptide onto the lipid carrier undecaprenyl phosphate, yielding undecaprenyl-pyrophosphoryl-MurNAc-pentapeptide, known as lipid I. The polypeptide is Phospho-N-acetylmuramoyl-pentapeptide-transferase (Stutzerimonas stutzeri (strain A1501) (Pseudomonas stutzeri)).